A 494-amino-acid chain; its full sequence is Ketol-acid reductoisomerase (NADP(+)) (494 aa).

In terms of domain architecture, KARI N-terminal Rossmann spans 14–208; it reads LDQLGRCRFM…GGHRAGCLES (195 aa). NADP(+)-binding positions include 45–48, arginine 68, arginine 76, serine 78, and 108–110; these read CGAQ and DKQ. Histidine 132 is an active-site residue. Position 158 (glycine 158) interacts with NADP(+). KARI C-terminal knotted domains lie at 209–344 and 345–487; these read SFVA…NYPS and TDVE…MTDM. The Mg(2+) site is built by aspartate 217, glutamate 221, glutamate 389, and glutamate 393. Substrate is bound at residue serine 414.

Belongs to the ketol-acid reductoisomerase family. The cofactor is Mg(2+).

The enzyme catalyses (2R)-2,3-dihydroxy-3-methylbutanoate + NADP(+) = (2S)-2-acetolactate + NADPH + H(+). The catalysed reaction is (2R,3R)-2,3-dihydroxy-3-methylpentanoate + NADP(+) = (S)-2-ethyl-2-hydroxy-3-oxobutanoate + NADPH + H(+). It functions in the pathway amino-acid biosynthesis; L-isoleucine biosynthesis; L-isoleucine from 2-oxobutanoate: step 2/4. Its pathway is amino-acid biosynthesis; L-valine biosynthesis; L-valine from pyruvate: step 2/4. Its function is as follows. Involved in the biosynthesis of branched-chain amino acids (BCAA). Catalyzes an alkyl-migration followed by a ketol-acid reduction of (S)-2-acetolactate (S2AL) to yield (R)-2,3-dihydroxy-isovalerate. In the isomerase reaction, S2AL is rearranged via a Mg-dependent methyl migration to produce 3-hydroxy-3-methyl-2-ketobutyrate (HMKB). In the reductase reaction, this 2-ketoacid undergoes a metal-dependent reduction by NADPH to yield (R)-2,3-dihydroxy-isovalerate. The polypeptide is Ketol-acid reductoisomerase (NADP(+)) (Vibrio vulnificus (strain CMCP6)).